Here is a 277-residue protein sequence, read N- to C-terminus: Diaminopimelate epimerase (277 aa).

Positions 17, 50, and 68 each coordinate substrate. C77 functions as the Proton donor in the catalytic mechanism. Substrate-binding positions include 78 to 79 (GN), N162, N195, and 213 to 214 (ER). Residue C222 is the Proton acceptor of the active site. Residue 223–224 (GT) participates in substrate binding.

Belongs to the diaminopimelate epimerase family. Homodimer.

The protein resides in the cytoplasm. It carries out the reaction (2S,6S)-2,6-diaminopimelate = meso-2,6-diaminopimelate. The protein operates within amino-acid biosynthesis; L-lysine biosynthesis via DAP pathway; DL-2,6-diaminopimelate from LL-2,6-diaminopimelate: step 1/1. Catalyzes the stereoinversion of LL-2,6-diaminopimelate (L,L-DAP) to meso-diaminopimelate (meso-DAP), a precursor of L-lysine and an essential component of the bacterial peptidoglycan. This Phenylobacterium zucineum (strain HLK1) protein is Diaminopimelate epimerase.